A 565-amino-acid polypeptide reads, in one-letter code: NAD-dependent malic enzyme (565 aa).

The active-site Proton donor is Tyr104. Arg157 lines the NAD(+) pocket. The active-site Proton acceptor is the Lys175. Glu246, Asp247, and Asp270 together coordinate a divalent metal cation. NAD(+) contacts are provided by Asp270 and Asn418.

Belongs to the malic enzymes family. Homotetramer. It depends on Mg(2+) as a cofactor. The cofactor is Mn(2+).

The catalysed reaction is (S)-malate + NAD(+) = pyruvate + CO2 + NADH. The enzyme catalyses oxaloacetate + H(+) = pyruvate + CO2. The polypeptide is NAD-dependent malic enzyme (Pectobacterium atrosepticum (strain SCRI 1043 / ATCC BAA-672) (Erwinia carotovora subsp. atroseptica)).